Here is an 875-residue protein sequence, read N- to C-terminus: Kelch-like protein 29 (875 aa).

The span at 113–126 (IRWGQTPVNQSTPW) shows a compositional bias: polar residues. 2 disordered regions span residues 113–145 (IRWG…PGTG) and 240–291 (GVGQ…DSAH). The segment covering 131–140 (PPSKQMRESD) has biased composition (basic and acidic residues). Residues 270–280 (PSAALPSSVPA) are compositionally biased toward low complexity. The 73-residue stretch at 329-401 (TDLKIVVEGR…VYTGSLVIDS (73 aa)) folds into the BTB domain. Kelch repeat units lie at residues 585–635 (VIVL…VSAG), 637–683 (NIYL…VYDG), 684–730 (KIYT…VCGG), 732–778 (IYVF…TLNG), 779–821 (FVFI…VLDG), and 822–870 (KIYA…VIKK).

In Mus musculus (Mouse), this protein is Kelch-like protein 29 (Klhl29).